Here is a 180-residue protein sequence, read N- to C-terminus: Insulin-like growth factor 2 (180 aa).

An N-terminal signal peptide occupies residues 1–24 (MGIPVGKSMLVLLISLAFALCCIA). Residues 25-52 (AYGPGETLCGGELVDTLQFVCSDRGFYF) form a b region. Disulfide bonds link cysteine 33–cysteine 71, cysteine 45–cysteine 84, and cysteine 70–cysteine 75. Positions 53 to 64 (SRPSSRANRRSR) are c. Positions 65 to 85 (GIVEECCFRSCDLALLETYCA) are a. The interval 86-91 (TPAKSE) is d. Positions 92-180 (RDVSTSQAVL…ASSEMSSNHQ (89 aa)) are cleaved as a propeptide — e peptide. The tract at residues 157–180 (PLIVLPPKDPAHGGASSEMSSNHQ) is disordered.

It belongs to the insulin family. Interacts with MYORG; this interaction is required for IGF2 secretion. Interacts with integrins ITGAV:ITGB3 and ITGA6:ITGB4; integrin-binding is required for IGF2 signaling. Interacts with IGFBP2. Post-translationally, proteolytically processed by PCSK4, proIGF2 is cleaved at Arg-128 and Arg-92 to generate big-IGF2 and mature IGF2. In terms of tissue distribution, expressed in the heart, blood serum, kidney and skeletal muscle including the tibialis anterior muscle.

The protein localises to the secreted. The insulin-like growth factors possess growth-promoting activity. Major fetal growth hormone in mammals. Plays a key role in regulating fetoplacental development. IGF2 is influenced by placental lactogen. Also involved in tissue differentiation. In adults, involved in glucose metabolism in adipose tissue, skeletal muscle and liver. Acts as a ligand for integrin which is required for IGF2 signaling. Positively regulates myogenic transcription factor MYOD1 function by facilitating the recruitment of transcriptional coactivators, thereby controlling muscle terminal differentiation. Inhibits myoblast differentiation and modulates metabolism via increasing the mitochondrial respiration rate. Its function is as follows. Preptin undergoes glucose-mediated co-secretion with insulin, and acts as a physiological amplifier of glucose-mediated insulin secretion. Exhibits osteogenic properties by increasing osteoblast mitogenic activity through phosphoactivation of MAPK1 and MAPK3. The protein is Insulin-like growth factor 2 of Mus musculus (Mouse).